We begin with the raw amino-acid sequence, 391 residues long: Paired box protein Pax-5 (391 aa).

The tract at residues 1–21 (MDLEKNYPTPRTSRTGHGGVN) is disordered. Positions 16 to 142 (GHGGVNQLGG…SSINRIIRTK (127 aa)) form a DNA-binding region, paired. The interval 19 to 75 (GVNQLGGVFVNGRPLPDVVRQRIVELAHQGVRPCDISRQLRVSHGCVSKILGRYYET) is PAI subdomain. An RED subdomain region spans residues 94 to 142 (KVVEKIAEYKRQNPTMFAWEIRDRLLAERVCDNDTVPSVSSINRIIRTK). The tract at residues 182-218 (SGILGITSPSADTNKRKRDEGIQESPVPNGHSLPGRD) is disordered.

As to quaternary structure, interacts with ETS1; this interaction alters PAX5 DNA-binding properties. Binds DNA as a monomer. Interacts with TBP; this interaction allows PAX5 to interact with the basal transcription machinery. Interacts with RB1. Interacts with TLE4. Interacts with DAXX. (Microbial infection) Interacts (via N-terminus) with Epstein-Barr virus protein BZLF1 (via C-terminus); this interaction inhibits BZLF1-mediated lytic viral reactivation. Interacts also with EBNA1; this interaction promotes EBNA1-dependent transcription. O-glycosylated. In terms of processing, phosphorylated by SYK. This phosphorylation plays an important role in the abolition of BLIMP1 repression by PAX5 in order to trigger plasma cell differentiation.

Its subcellular location is the nucleus. Its function is as follows. Transcription factor that plays an essential role in commitment of lymphoid progenitors to the B-lymphocyte lineage. Fulfills a dual role by repressing B-lineage inappropriate genes and simultaneously activating B-lineage-specific genes. In turn, regulates cell adhesion and migration, induces V(H)-to-D(H)J(H) recombination, facilitates pre-B-cell receptor signaling and promotes development to the mature B-cell stage. Repression of the cohesin-release factor WAPL causes global changes of the chromosomal architecture in pro-B cells to facilitate the generation of a diverse antibody repertoire. In terms of biological role, (Microbial infection) Plays an essential role in the maintenance of Epstein-Barr virus genome copy number within the host cell by promoting EBNA1/oriP-dependent binding and transcription. Also participates in the inhibition of lytic EBV reactivation by modulating viral BZLF1 activity. The polypeptide is Paired box protein Pax-5 (PAX5) (Homo sapiens (Human)).